We begin with the raw amino-acid sequence, 241 residues long: Large ribosomal subunit protein uL2 (241 aa).

The interval 200-241 is disordered; the sequence is AVDHPHGGGNRQHPGRPTTISRHAPAGRKVGSIAAKRTGKRR.

The protein belongs to the universal ribosomal protein uL2 family. In terms of assembly, part of the 50S ribosomal subunit. Forms a bridge to the 30S subunit in the 70S ribosome.

In terms of biological role, one of the primary rRNA binding proteins. Required for association of the 30S and 50S subunits to form the 70S ribosome, for tRNA binding and peptide bond formation. It has been suggested to have peptidyltransferase activity; this is somewhat controversial. Makes several contacts with the 16S rRNA in the 70S ribosome. The chain is Large ribosomal subunit protein uL2 from Methanosphaera stadtmanae (strain ATCC 43021 / DSM 3091 / JCM 11832 / MCB-3).